A 92-amino-acid chain; its full sequence is Isoleucine--tRNA ligase (92 aa).

Cys55, Cys58, Cys75, and Cys78 together coordinate Zn(2+).

Belongs to the class-I aminoacyl-tRNA synthetase family. IleS type 1 subfamily. As to quaternary structure, monomer. Requires Zn(2+) as cofactor.

The protein resides in the cytoplasm. It carries out the reaction tRNA(Ile) + L-isoleucine + ATP = L-isoleucyl-tRNA(Ile) + AMP + diphosphate. In terms of biological role, catalyzes the attachment of isoleucine to tRNA(Ile). As IleRS can inadvertently accommodate and process structurally similar amino acids such as valine, to avoid such errors it has two additional distinct tRNA(Ile)-dependent editing activities. One activity is designated as 'pretransfer' editing and involves the hydrolysis of activated Val-AMP. The other activity is designated 'posttransfer' editing and involves deacylation of mischarged Val-tRNA(Ile). This chain is Isoleucine--tRNA ligase (ileS), found in Klebsiella aerogenes (Enterobacter aerogenes).